Here is a 397-residue protein sequence, read N- to C-terminus: Odorant receptor 22b (397 aa).

At 1 to 49 the chain is on the cytoplasmic side; that stretch reads MLSQFFPHIKEKPLSERVKSRDAFVYLDRVMWSFGWTVPENKRWDLHYK. The helical transmembrane segment at 50 to 70 threads the bilayer; that stretch reads LWSTFVTLLIFILLPISVSVE. At 71–85 the chain is on the extracellular side; that stretch reads YIQRFKTFSAGEFLS. Residues 86–105 form a helical membrane-spanning segment; the sequence is SIQIGVNMYGSSFKSYLTMM. Topologically, residues 106-143 are cytoplasmic; sequence GYKKRQEAKMSLDELDKRCVCDEERTIVHRHVALGNFC. Residues 144-164 form a helical membrane-spanning segment; it reads YIFYHIAYTSFLISNFLSFIM. Residues 165 to 194 lie on the Extracellular side of the membrane; sequence KRIHAWRMYFPYVDPEKQFYISSIAEVILR. The helical transmembrane segment at 195–215 threads the bilayer; it reads GWAVFMDLCTDVCPLISMVIA. At 216–268 the chain is on the cytoplasmic side; the sequence is RCHITLLKQRLRNLRSEPGRTEDEYLKELADCVRDHRLILDYVDALRSVFSGT. The helical transmembrane segment at 269-289 threads the bilayer; the sequence is IFVQFLLIGIVLGLSMINIMF. At 290-295 the chain is on the extracellular side; the sequence is FSTLST. The chain crosses the membrane as a helical span at residues 296–316; sequence GVAVVLFMSCVSMQTFPFCYL. Residues 317–347 are Cytoplasmic-facing; that stretch reads CNMIMDDCQEMADSLFQSDWTSADRRYKSTL. Residues 348–368 form a helical membrane-spanning segment; it reads VYFLHNLQQPIILTAGGVFPI. At 369–397 the chain is on the extracellular side; that stretch reads SMQTNLNMVKLAFTVVTIVKQFNLAEKFQ.

The protein belongs to the insect chemoreceptor superfamily. Heteromeric odorant receptor channel (TC 1.A.69) family. Or2a subfamily. Interacts with Orco, via conserved C-terminal cytoplasmic loops. Complexes exist early in the endomembrane system in olfactory sensory neurons (OSNs), coupling these complexes to the conserved ciliary trafficking pathway. Expressed with Orco in 20-22 sensory neurons on the medial-proximal edge of the antenna. This expression pattern matches the distribution of the large sensilla basiconica. Expression is first seen at 60 hours APF in a subset of cells restricted to a subregion of the developing antenna. Expression continues throughout antennal development. Expressed in the ab3A neuron which responds to ethyl butyrate.

It localises to the cell membrane. Functionally, odorant receptor which mediates acceptance or avoidance behavior, depending on its substrates. The odorant receptor repertoire encodes a large collection of odor stimuli that vary widely in identity, intensity, and duration. Involved in the behavioral responses to esters. Complexes with Orco to form odorant-sensing units, providing sensitive and prolonged odorant signaling and calcium permeability. They are necessary and sufficient to promote functional reconstitution of odor-evoked signaling in sensory neurons that normally respond only to carbon dioxide. The chain is Odorant receptor 22b (Or22b) from Drosophila melanogaster (Fruit fly).